Reading from the N-terminus, the 345-residue chain is uncharacterized protein (345 aa).

Belongs to the methyltransferase superfamily.

This is an uncharacterized protein from Streptomyces fradiae (Streptomyces roseoflavus).